Reading from the N-terminus, the 192-residue chain is Nucleotidase CA_C3379 (192 aa).

It belongs to the 5'(3')-deoxyribonucleotidase family. Mg(2+) serves as cofactor.

It carries out the reaction sugar phosphate + H2O = sugar + phosphate.. In terms of biological role, catalyzes the dephosphorylation of nucleotide monophosphates and of different sugar phosphates in vitro. The chain is Nucleotidase CA_C3379 from Clostridium acetobutylicum (strain ATCC 824 / DSM 792 / JCM 1419 / IAM 19013 / LMG 5710 / NBRC 13948 / NRRL B-527 / VKM B-1787 / 2291 / W).